The primary structure comprises 354 residues: Photosystem II protein D1 2 (354 aa).

A run of 3 helical transmembrane segments spans residues 29 to 46 (YIGW…TATT), 118 to 133 (HFLI…EWEL), and 142 to 156 (WIAV…AATA). Position 118 (His-118) interacts with chlorophyll a. Tyr-126 lines the pheophytin a pocket. [CaMn4O5] cluster-binding residues include Asp-170 and Glu-189. A helical transmembrane segment spans residues 197–218 (FHQLGVAGVFGGALFSAMHGSL). Position 198 (His-198) interacts with chlorophyll a. A quinone is bound by residues His-215 and 264–265 (SF). Position 215 (His-215) interacts with Fe cation. His-272 lines the Fe cation pocket. The chain crosses the membrane as a helical span at residues 274–288 (FLAAWPVIGIWFTAL). Residues His-332, Glu-333, Asp-342, and Ala-344 each contribute to the [CaMn4O5] cluster site. A propeptide spanning residues 345–354 (AVEVAPAVRG) is cleaved from the precursor.

Belongs to the reaction center PufL/M/PsbA/D family. In terms of assembly, PSII is composed of 1 copy each of membrane proteins PsbA, PsbB, PsbC, PsbD, PsbE, PsbF, PsbH, PsbI, PsbJ, PsbK, PsbL, PsbM, PsbT, PsbX, PsbY, PsbZ, Psb30/Ycf12, peripheral proteins PsbO, CyanoQ (PsbQ), PsbU, PsbV and a large number of cofactors. It forms dimeric complexes. It depends on The D1/D2 heterodimer binds P680, chlorophylls that are the primary electron donor of PSII, and subsequent electron acceptors. It shares a non-heme iron and each subunit binds pheophytin, quinone, additional chlorophylls, carotenoids and lipids. D1 provides most of the ligands for the Mn4-Ca-O5 cluster of the oxygen-evolving complex (OEC). There is also a Cl(-1) ion associated with D1 and D2, which is required for oxygen evolution. The PSII complex binds additional chlorophylls, carotenoids and specific lipids. as a cofactor. In terms of processing, tyr-161 forms a radical intermediate that is referred to as redox-active TyrZ, YZ or Y-Z. Post-translationally, C-terminally processed by CtpA; processing is essential to allow assembly of the oxygen-evolving complex and thus photosynthetic growth.

It is found in the cellular thylakoid membrane. The catalysed reaction is 2 a plastoquinone + 4 hnu + 2 H2O = 2 a plastoquinol + O2. Its function is as follows. Photosystem II (PSII) is a light-driven water:plastoquinone oxidoreductase that uses light energy to abstract electrons from H(2)O, generating O(2) and a proton gradient subsequently used for ATP formation. It consists of a core antenna complex that captures photons, and an electron transfer chain that converts photonic excitation into a charge separation. The D1/D2 (PsbA/PsbD) reaction center heterodimer binds P680, the primary electron donor of PSII as well as several subsequent electron acceptors. In Synechococcus sp. (strain JA-2-3B'a(2-13)) (Cyanobacteria bacterium Yellowstone B-Prime), this protein is Photosystem II protein D1 2.